Here is a 303-residue protein sequence, read N- to C-terminus: Tumor necrosis factor receptor type 1-associated DEATH domain protein (303 aa).

The short motif at 141 to 157 (QKDDELAEIDERLKSIK) is the Nuclear export signal element. The Death domain occupies 208–298 (TSAHIQHFAK…SIALDLLSLN (91 aa)). The Nuclear localization signal motif lies at 224–237 (KPVGRSLGKTCRAL).

In terms of assembly, heterodimer with tnfrsf1a.

The protein resides in the nucleus. It is found in the cytoplasm. It localises to the cytoskeleton. In terms of biological role, adapter molecule for tnfrsf1a that specifically associates with the cytoplasmic domain of activated tnfrsf1a mediating its interaction with fadd. The protein is Tumor necrosis factor receptor type 1-associated DEATH domain protein of Xenopus laevis (African clawed frog).